The primary structure comprises 406 residues: Lysophospholipid transporter LplT (406 aa).

11 consecutive transmembrane segments (helical) span residues 16-36, 53-73, 91-111, 139-159, 164-184, 227-247, 253-273, 285-305, 310-330, 349-369, and 372-392; these read MVAV…LLFA, ILQM…GQIA, AGAL…LVGV, MMEA…GILA, MAAL…NLFI, LFWG…PVAL, ATPT…AGAA, CLPA…QNSM, LLLI…NALL, LGEN…VKLG, and VVAV…LLWG.

The protein belongs to the major facilitator superfamily. LplT (TC 2.A.1.42) family.

Its subcellular location is the cell inner membrane. Catalyzes the facilitated diffusion of 2-acyl-glycero-3-phosphoethanolamine (2-acyl-GPE) into the cell. The chain is Lysophospholipid transporter LplT from Yersinia pestis bv. Antiqua (strain Antiqua).